Reading from the N-terminus, the 439-residue chain is GTPase Obg (439 aa).

The Obg domain maps to 3–162 (GEFYDSARIF…REIELELKLL (160 aa)). One can recognise an OBG-type G domain in the interval 163-333 (ADVGLIGFPN…LLQRVAERLR (171 aa)). GTP is bound by residues 169–176 (GFPNAGKS), 194–198 (FTTLQ), 215–218 (DIPG), 285–288 (NKAD), and 314–316 (SAA). Residues Ser-176 and Thr-196 each coordinate Mg(2+). Positions 351-428 (VPEVDERLYT…IEQAAFDWED (78 aa)) constitute an OCT domain.

This sequence belongs to the TRAFAC class OBG-HflX-like GTPase superfamily. OBG GTPase family. In terms of assembly, monomer. The cofactor is Mg(2+).

It localises to the cytoplasm. Functionally, an essential GTPase which binds GTP, GDP and possibly (p)ppGpp with moderate affinity, with high nucleotide exchange rates and a fairly low GTP hydrolysis rate. Plays a role in control of the cell cycle, stress response, ribosome biogenesis and in those bacteria that undergo differentiation, in morphogenesis control. In Roseiflexus castenholzii (strain DSM 13941 / HLO8), this protein is GTPase Obg.